We begin with the raw amino-acid sequence, 221 residues long: UPF0502 protein PSPTO_2686 (221 aa).

It belongs to the UPF0502 family.

The chain is UPF0502 protein PSPTO_2686 from Pseudomonas syringae pv. tomato (strain ATCC BAA-871 / DC3000).